Reading from the N-terminus, the 126-residue chain is Large ribosomal subunit protein bL19 (126 aa).

The protein belongs to the bacterial ribosomal protein bL19 family.

This protein is located at the 30S-50S ribosomal subunit interface and may play a role in the structure and function of the aminoacyl-tRNA binding site. In Dechloromonas aromatica (strain RCB), this protein is Large ribosomal subunit protein bL19.